The chain runs to 496 residues: Ribose import ATP-binding protein RbsA (496 aa).

2 consecutive ABC transporter domains span residues 5–242 (IEMK…VGRS) and 252–496 (SQIG…TGGE). An ATP-binding site is contributed by 37-44 (GENGAGKS).

It belongs to the ABC transporter superfamily. Ribose importer (TC 3.A.1.2.1) family. The complex is composed of an ATP-binding protein (RbsA), two transmembrane proteins (RbsC) and a solute-binding protein (RbsB).

It localises to the cell membrane. It catalyses the reaction D-ribose(out) + ATP + H2O = D-ribose(in) + ADP + phosphate + H(+). Its function is as follows. Part of the ABC transporter complex RbsABC involved in ribose import. Responsible for energy coupling to the transport system. The chain is Ribose import ATP-binding protein RbsA from Bacillus cereus (strain ATCC 14579 / DSM 31 / CCUG 7414 / JCM 2152 / NBRC 15305 / NCIMB 9373 / NCTC 2599 / NRRL B-3711).